A 292-amino-acid chain; its full sequence is Protease HtpX (292 aa).

2 helical membrane-spanning segments follow: residues 4-24 (IILF…ILAV) and 32-52 (IYGL…LSLI). Residue histidine 139 participates in Zn(2+) binding. The active site involves glutamate 140. Zn(2+) is bound at residue histidine 143. Helical transmembrane passes span 150 to 170 (ITMT…SRII) and 193 to 213 (FLFF…ASII). Glutamate 222 serves as a coordination point for Zn(2+).

The protein belongs to the peptidase M48B family. Requires Zn(2+) as cofactor.

Its subcellular location is the cell membrane. In Buchnera aphidicola subsp. Schizaphis graminum (strain Sg), this protein is Protease HtpX.